A 425-amino-acid polypeptide reads, in one-letter code: Pre-mRNA-splicing factor PRP46 (425 aa).

WD repeat units follow at residues 111 to 151 (GHTG…LKVT), 154 to 193 (GHIM…VVRD), 196 to 235 (GTLS…CVLT), 238 to 279 (GHRG…KTLT), 281 to 320 (HKRN…TNFN), 322 to 360 (EALG…KFQK), and 371 to 410 (ESEK…TQDS).

It belongs to the WD repeat PRL1/PRL2 family. As to quaternary structure, associated with the spliceosome.

The protein localises to the cytoplasm. The protein resides in the nucleus. Its function is as follows. Involved in pre-mRNA splicing and required for cell cycle progression at G2/M. The chain is Pre-mRNA-splicing factor PRP46 (PRP46) from Eremothecium gossypii (strain ATCC 10895 / CBS 109.51 / FGSC 9923 / NRRL Y-1056) (Yeast).